The following is a 143-amino-acid chain: Large ribosomal subunit protein uL13 (143 aa).

It belongs to the universal ribosomal protein uL13 family. Part of the 50S ribosomal subunit.

This protein is one of the early assembly proteins of the 50S ribosomal subunit, although it is not seen to bind rRNA by itself. It is important during the early stages of 50S assembly. The polypeptide is Large ribosomal subunit protein uL13 (Geobacter sulfurreducens (strain ATCC 51573 / DSM 12127 / PCA)).